A 564-amino-acid chain; its full sequence is Proline--tRNA ligase (564 aa).

It belongs to the class-II aminoacyl-tRNA synthetase family. ProS type 1 subfamily. Homodimer.

It is found in the cytoplasm. It catalyses the reaction tRNA(Pro) + L-proline + ATP = L-prolyl-tRNA(Pro) + AMP + diphosphate. Functionally, catalyzes the attachment of proline to tRNA(Pro) in a two-step reaction: proline is first activated by ATP to form Pro-AMP and then transferred to the acceptor end of tRNA(Pro). As ProRS can inadvertently accommodate and process non-cognate amino acids such as alanine and cysteine, to avoid such errors it has two additional distinct editing activities against alanine. One activity is designated as 'pretransfer' editing and involves the tRNA(Pro)-independent hydrolysis of activated Ala-AMP. The other activity is designated 'posttransfer' editing and involves deacylation of mischarged Ala-tRNA(Pro). The misacylated Cys-tRNA(Pro) is not edited by ProRS. The sequence is that of Proline--tRNA ligase from Bacillus velezensis (strain DSM 23117 / BGSC 10A6 / LMG 26770 / FZB42) (Bacillus amyloliquefaciens subsp. plantarum).